Consider the following 406-residue polypeptide: Copper transport protein CTR1 (406 aa).

The Cytoplasmic portion of the chain corresponds to methionine 1–lysine 152. 3 repeat units span residues serine 9 to alanine 27, serine 28 to serine 46, and serine 47 to serine 65. The interval serine 9–serine 65 is 3 X 19 AA tandem repeats of S-M-X-M-X-A-M-S-S-A-S-K-T-X-X-S-X-M-X. Residues serine 71–serine 117 are disordered. Residues alanine 153 to valine 173 traverse the membrane as a helical segment. The Extracellular portion of the chain corresponds to serine 174–methionine 250. The helical transmembrane segment at isoleucine 251–isoleucine 271 threads the bilayer. Residues threonine 272 to asparagine 406 are Cytoplasmic-facing. An REP-III motif is present at residues cysteine 304–histidine 315. Positions proline 318–asparagine 406 are disordered. Serine 344 bears the Phosphoserine mark. Lysine 345 is covalently cross-linked (Glycyl lysine isopeptide (Lys-Gly) (interchain with G-Cter in ubiquitin)). Serine 349 carries the phosphoserine modification. Composition is skewed to polar residues over residues serine 349 to asparagine 375 and serine 384 to glutamine 395. Threonine 356 is subject to Phosphothreonine. Position 369 is a phosphoserine (serine 369).

Homooligomer. In terms of processing, extensively O-glycosylated.

It is found in the cell membrane. The catalysed reaction is Cu(2+)(in) = Cu(2+)(out). Its function is as follows. High-affinity copper transporter of plasma membrane that mediates copper uptake under low copper conditions. Copper transport through the high affinity system requiring CTRl supplies the iron transport multicopper ferroxidase FET3 with copper, which in turn is required for ferrous iron uptake. The energy for translocation is unlikely to be directly derived from ATP hydrolysis and the exact mechanism driving the transmembrane transport of copper has still to be determined. Binds 4 copper ions via its C-terminal cystein-rich domain and is able to deliver Cu(I) directly to both the chaperone ATX1 and to an N-terminal domain of the CCC2 protein. Also able to mediate the uptake of the anticancer drug cisplatin. The protein is Copper transport protein CTR1 of Saccharomyces cerevisiae (strain ATCC 204508 / S288c) (Baker's yeast).